The chain runs to 285 residues: Energy-coupling factor transporter ATP-binding protein EcfA2 (285 aa).

The ABC transporter domain occupies 3-245 (INFEQVNFSY…DLVWFKTVAL (243 aa)). 40-47 (GQTGSGKS) serves as a coordination point for ATP. Residue glutamate 171 is the Proton acceptor of the active site.

It belongs to the ABC transporter superfamily. Energy-coupling factor EcfA family. As to quaternary structure, forms a stable energy-coupling factor (ECF) transporter complex probably composed of 2 membrane-embedded substrate-binding proteins (S component), 2 ATP-binding proteins (A component) and 2 transmembrane proteins (T component). This complex interacts with a number of substrate-specific components, including FolT, PanT and RibU for 5-formyltetrahydrofolate, pantothenate and riboflavin respectively.

The protein resides in the cell membrane. Functionally, ATP-binding (A) component of a common energy-coupling factor (ECF) ABC-transporter complex. Unlike classic ABC transporters this ECF transporter provides the energy necessary to transport a number of different substrates including 5-formyltetrahydrofolate, pantothenate and riboflavin. Expression of the complex plus FolT in E.coli allows 5-formyltetrahydrofolate uptake; 5-formyltetrahydrofolate is not taken up in the absence of FolT or the EcfA1A2T complex. The chain is Energy-coupling factor transporter ATP-binding protein EcfA2 from Leuconostoc mesenteroides subsp. mesenteroides (strain ATCC 8293 / DSM 20343 / BCRC 11652 / CCM 1803 / JCM 6124 / NCDO 523 / NBRC 100496 / NCIMB 8023 / NCTC 12954 / NRRL B-1118 / 37Y).